The primary structure comprises 88 residues: Sec-independent protein translocase protein TatA (88 aa).

Residues 1–21 form a helical membrane-spanning segment; it reads MGSIGWAQLLIIAVIVVLLFG. Residues 41-88 are disordered; that stretch reads KAMGDDSQTPPTNVDKTSNDADFAKSITEKQQPVAKAEESKSHEKEQG. The span at 46–56 shows a compositional bias: polar residues; that stretch reads DSQTPPTNVDK. Over residues 76-88 the composition is skewed to basic and acidic residues; that stretch reads KAEESKSHEKEQG.

Belongs to the TatA/E family. In terms of assembly, the Tat system comprises two distinct complexes: a TatABC complex, containing multiple copies of TatA, TatB and TatC subunits, and a separate TatA complex, containing only TatA subunits. Substrates initially bind to the TatABC complex, which probably triggers association of the separate TatA complex to form the active translocon.

The protein localises to the cell inner membrane. Functionally, part of the twin-arginine translocation (Tat) system that transports large folded proteins containing a characteristic twin-arginine motif in their signal peptide across membranes. TatA could form the protein-conducting channel of the Tat system. The polypeptide is Sec-independent protein translocase protein TatA (Yersinia pestis).